The sequence spans 204 residues: MGSIGNGRNGSEVGIQIPAMGNKEVLERPAIPRWPRLGVVMVATRAVALVMAVLSMALMISAKQRGSLKIFGIEIPLYANWSFSDSLEYLVGMSAVSAAYCLAQLLLTAHKAVKNAPVVQSRNYAWLLFTGDQIFAYAMMSAGSAAAAVANLNRTGIRHTALPNFCKPLPRFCDLSAASIACAFLSCIFLAASAVIDVIWLSNM.

Residues Met1–Val39 are Cytoplasmic-facing. The chain crosses the membrane as a helical span at residues Val40 to Ile60. Residues Ser61–Glu88 are Extracellular-facing. A glycan (N-linked (GlcNAc...) asparagine) is linked at Asn80. Residues Tyr89–Ala109 traverse the membrane as a helical segment. The Cytoplasmic portion of the chain corresponds to His110–Tyr124. A helical transmembrane segment spans residues Ala125 to Ala145. Residues Ala146–Ser179 lie on the Extracellular side of the membrane. An N-linked (GlcNAc...) asparagine glycan is attached at Asn153. The helical transmembrane segment at Ile180–Trp200 threads the bilayer. Over Leu201–Met204 the chain is Cytoplasmic.

It belongs to the Casparian strip membrane proteins (CASP) family. In terms of assembly, homodimer and heterodimers.

The protein localises to the cell membrane. In Oryza sativa subsp. indica (Rice), this protein is CASP-like protein 3A1.